A 640-amino-acid polypeptide reads, in one-letter code: uncharacterized protein (640 aa).

Residues 594 to 614 form a disordered region; the sequence is QCSSDHCKPGSSETLPEATNE.

This is an uncharacterized protein from Rattus norvegicus (Rat).